The primary structure comprises 1026 residues: Phosphoenolpyruvate carboxylase (1026 aa).

Residues histidine 199 and lysine 672 contribute to the active site.

Belongs to the PEPCase type 1 family. It depends on Mg(2+) as a cofactor.

It carries out the reaction oxaloacetate + phosphate = phosphoenolpyruvate + hydrogencarbonate. In terms of biological role, forms oxaloacetate, a four-carbon dicarboxylic acid source for the tricarboxylic acid cycle. This chain is Phosphoenolpyruvate carboxylase (ppc), found in Nostoc sp. (strain PCC 7120 / SAG 25.82 / UTEX 2576).